Here is a 134-residue protein sequence, read N- to C-terminus: Ribosome-binding factor A (134 aa).

It belongs to the RbfA family. In terms of assembly, monomer. Binds 30S ribosomal subunits, but not 50S ribosomal subunits or 70S ribosomes.

It localises to the cytoplasm. One of several proteins that assist in the late maturation steps of the functional core of the 30S ribosomal subunit. Associates with free 30S ribosomal subunits (but not with 30S subunits that are part of 70S ribosomes or polysomes). Required for efficient processing of 16S rRNA. May interact with the 5'-terminal helix region of 16S rRNA. The polypeptide is Ribosome-binding factor A (Bdellovibrio bacteriovorus (strain ATCC 15356 / DSM 50701 / NCIMB 9529 / HD100)).